A 192-amino-acid chain; its full sequence is Phosphoheptose isomerase (192 aa).

In terms of domain architecture, SIS spans 37–192 (LADSFKAGGK…IQLIEKEMVK (156 aa)). A substrate-binding site is contributed by 52–54 (NGG). 2 residues coordinate Zn(2+): His61 and Glu65. Substrate-binding positions include Glu65, 93-94 (ND), 119-121 (STS), Ser124, and Gln172. Zn(2+) is bound by residues Gln172 and His180.

It belongs to the SIS family. GmhA subfamily. In terms of assembly, homotetramer. Requires Zn(2+) as cofactor.

It is found in the cytoplasm. It carries out the reaction 2 D-sedoheptulose 7-phosphate = D-glycero-alpha-D-manno-heptose 7-phosphate + D-glycero-beta-D-manno-heptose 7-phosphate. Its pathway is carbohydrate biosynthesis; D-glycero-D-manno-heptose 7-phosphate biosynthesis; D-glycero-alpha-D-manno-heptose 7-phosphate and D-glycero-beta-D-manno-heptose 7-phosphate from sedoheptulose 7-phosphate: step 1/1. In terms of biological role, catalyzes the isomerization of sedoheptulose 7-phosphate in D-glycero-D-manno-heptose 7-phosphate. This is Phosphoheptose isomerase from Salmonella agona (strain SL483).